A 475-amino-acid polypeptide reads, in one-letter code: Cytochrome c-552 (475 aa).

Residues Met1–Ala29 form the signal peptide. The disordered stretch occupies residues Pro38–Thr57. Residue His92 participates in heme c binding. Residues Cys120, Cys123, and Lys124 each contribute to the heme site. Positions 158, 161, 162, 207, 210, and 211 each coordinate heme c. Positions 213, 214, 259, and 261 each coordinate Ca(2+). Tyr214 contributes to the substrate binding site. Residue His262 participates in substrate binding. Positions 273, 280, 283, 284, 299, 312, 315, 316, and 391 each coordinate heme c.

This sequence belongs to the cytochrome c-552 family. The cofactor is Ca(2+). It depends on heme c as a cofactor.

It localises to the periplasm. The enzyme catalyses 6 Fe(III)-[cytochrome c] + NH4(+) + 2 H2O = 6 Fe(II)-[cytochrome c] + nitrite + 8 H(+). The protein operates within nitrogen metabolism; nitrate reduction (assimilation). Catalyzes the reduction of nitrite to ammonia, consuming six electrons in the process. The protein is Cytochrome c-552 of Vibrio parahaemolyticus serotype O3:K6 (strain RIMD 2210633).